We begin with the raw amino-acid sequence, 509 residues long: ATP synthase subunit alpha (509 aa).

169 to 176 contacts ATP; that stretch reads GDRQTGKT.

Belongs to the ATPase alpha/beta chains family. F-type ATPases have 2 components, CF(1) - the catalytic core - and CF(0) - the membrane proton channel. CF(1) has five subunits: alpha(3), beta(3), gamma(1), delta(1), epsilon(1). CF(0) has four main subunits: a(1), b(1), b'(1) and c(9-12).

The protein resides in the cell inner membrane. It catalyses the reaction ATP + H2O + 4 H(+)(in) = ADP + phosphate + 5 H(+)(out). Functionally, produces ATP from ADP in the presence of a proton gradient across the membrane. The alpha chain is a regulatory subunit. This Erythrobacter litoralis (strain HTCC2594) protein is ATP synthase subunit alpha.